The primary structure comprises 441 residues: MLLNISSSPISHRIPHFLSDFNNPTSNFPPKSKTHLPKSNLSTLSNHSLYGTKNRAFYKNKRNPYNRTQALGRFDFGSLESVLEASAVLTAIIVVHETGHFLAASLQGIRVSKFAIGFGPILAKFNSNNVEYSLRAFPLGGFVGFPDNDPDSDIPVDDRNLLKNRPILDRVIVVSAGIVANVIFAYAIIFTQVVSVGLPVQESFPGVLVPDVKSFSAASRDGLLPGDVILAVDGTELSNSGSDSVSKVVDVVKRNPEHNVLLRIERGKESFEIRITPDKSFDGTGKIGVQLSPNVRFGKVRPKNIPETFSFAGREFFGLSYNVLDSLKQTFLNFSQTASKVAGPVAIIAVGAEVARSNADGLYQFAALLNLNLAVINLLPLPALDGGTLALILLEAVRGGRKLPLEVEQGIMSSGIMLVLFLGLFLIVKDTLNLDFIKEML.

A chloroplast-targeting transit peptide spans 1-84 (MLLNISSSPI…DFGSLESVLE (84 aa)). A Zn(2+)-binding site is contributed by histidine 96. Residue glutamate 97 is part of the active site. Histidine 100 is a Zn(2+) binding site. Residues 171–191 (VIVVSAGIVANVIFAYAIIFT) form a helical membrane-spanning segment. The region spanning 196 to 249 (VGLPVQESFPGVLVPDVKSFSAASRDGLLPGDVILAVDGTELSNSGSDSVSKVV) is the PDZ domain. The next 2 helical transmembrane spans lie at 373–393 (LAVI…ALIL) and 407–427 (VEQG…LFLI).

This sequence belongs to the peptidase M50A family. Zn(2+) is required as a cofactor.

It is found in the plastid. It localises to the chloroplast inner membrane. Its function is as follows. Metalloprotease essential for chloroplast and plant development. May be involved in regulated intramembrane proteolysis (RIP). This Arabidopsis thaliana (Mouse-ear cress) protein is Probable membrane metalloprotease ARASP2, chloroplastic.